Here is a 206-residue protein sequence, read N- to C-terminus: Flavin reductase (NADPH) (206 aa).

8 residues coordinate NADP(+): Gly10, Thr12, Gly13, Gln14, Thr15, Arg35, Ser38, and Arg39. Phosphoserine is present on Ser42. NADP(+) contacts are provided by Asp54, Val55, Leu75, Gly76, and Arg78. At Ser82 the chain carries Phosphoserine. NADP(+) contacts are provided by Met87, Cys109, His132, His153, and Ile154. Cys109 acts as the S-nitroso-cysteine intermediate; for S-nitroso-CoA-dependent nitrosyltransferase activity in catalysis. Cys188 serves as the catalytic S-nitroso-cysteine intermediate; for S-nitroso-CoA-dependent nitrosyltransferase activity.

This sequence belongs to the BLVRB family. As to quaternary structure, monomer. Predominantly expressed in liver and erythrocytes. At lower levels in heart, lung, adrenal gland and cerebrum. Expressed in adult red blood cells.

It is found in the cytoplasm. It carries out the reaction reduced riboflavin + NADP(+) = riboflavin + NADPH + 2 H(+). The enzyme catalyses bilirubin IXbeta + NADP(+) = biliverdin IXbeta + NADPH + H(+). It catalyses the reaction FMNH2 + NAD(+) = FMN + NADH + 2 H(+). The catalysed reaction is FMNH2 + NADP(+) = FMN + NADPH + 2 H(+). It carries out the reaction S-nitroso-CoA + L-cysteinyl-[protein] = S-nitroso-L-cysteinyl-[protein] + CoA. The enzyme catalyses L-cysteinyl-[SCAN] + S-nitroso-CoA = S-nitroso-L-cysteinyl-[SCAN] + CoA. It catalyses the reaction S-nitroso-L-cysteinyl-[SCAN] + L-cysteinyl-[protein] = L-cysteinyl-[SCAN] + S-nitroso-L-cysteinyl-[protein]. With respect to regulation, mesobiliverdin acts as a competitive inhibitor for flavin reduction, indicating that flavin and tetrapyrrole substrates compete for the same site. Inhibited by a wide range of xanthene-based drugs, such as phloxine B, erythrosin B, tamibarotene, sulfasalazine, olsalazine, febuxostat, ataluren (PTC124) and deferasirox. In terms of biological role, enzyme that can both act as a NAD(P)H-dependent reductase and a S-nitroso-CoA-dependent nitrosyltransferase. Promotes fetal heme degradation during development. Also expressed in adult tissues, where it acts as a regulator of hematopoiesis, intermediary metabolism (glutaminolysis, glycolysis, TCA cycle and pentose phosphate pathway) and insulin signaling. Has a broad specificity oxidoreductase activity by catalyzing the NAD(P)H-dependent reduction of a variety of flavins, such as riboflavin, FAD or FMN, biliverdins, methemoglobin and PQQ (pyrroloquinoline quinone). Contributes to fetal heme catabolism by catalyzing reduction of biliverdin IXbeta into bilirubin IXbeta in the liver. Biliverdin IXbeta, which constitutes the major heme catabolite in the fetus is not present in adult. Does not reduce bilirubin IXalpha. Can also reduce the complexed Fe(3+) iron to Fe(2+) in the presence of FMN and NADPH. Acts as a protein nitrosyltransferase by catalyzing nitrosylation of cysteine residues of target proteins, such as HMOX2, INSR and IRS1. S-nitroso-CoA-dependent nitrosyltransferase activity is mediated via a 'ping-pong' mechanism: BLVRB first associates with both S-nitroso-CoA and protein substrate, nitric oxide group is then transferred from S-nitroso-CoA to Cys-109 and Cys-188 residues of BLVRB and from S-nitroso-BLVRB to the protein substrate. Inhibits insulin signaling by mediating nitrosylation of INSR and IRS1, leading to their inhibition. The protein is Flavin reductase (NADPH) of Homo sapiens (Human).